The following is a 467-amino-acid chain: 3-isopropylmalate dehydratase large subunit (467 aa).

Positions 348, 409, and 412 each coordinate [4Fe-4S] cluster.

It belongs to the aconitase/IPM isomerase family. LeuC type 1 subfamily. As to quaternary structure, heterodimer of LeuC and LeuD. The cofactor is [4Fe-4S] cluster.

It catalyses the reaction (2R,3S)-3-isopropylmalate = (2S)-2-isopropylmalate. It functions in the pathway amino-acid biosynthesis; L-leucine biosynthesis; L-leucine from 3-methyl-2-oxobutanoate: step 2/4. Its function is as follows. Catalyzes the isomerization between 2-isopropylmalate and 3-isopropylmalate, via the formation of 2-isopropylmaleate. This chain is 3-isopropylmalate dehydratase large subunit, found in Magnetococcus marinus (strain ATCC BAA-1437 / JCM 17883 / MC-1).